The sequence spans 359 residues: MNAMDNMTADYSPDYFDDAVNSSMCEYDEWEPSYSLIPVLYMLIFILGLTGNGVVIFTVWRAQSKRRAADVYIGNLALADLTFVVTLPLWAVYTALGYHWPFGVALCKISSYVVLLNMYASVFCLTCLSLDRYMAIVHSLTSTQLRTRGHMRASLTAIWLLSGVLAAPTLLFRTTVYDVETNRTSCAMDFNLVVSQPGQETYWIAGLSISSTALGFLIPLLAMMVCYGFIGCTVTRHFNSLRKEDQRKRRLLKIITTLVVVFAACWMPFHVVKTMDALSYLNLAPDSCTFLNLLLLAHPYATCLAYVNSCLNPLLYAFFDLRFRSQCLCLLNLKKALHASPASSLSSQKTEAQSLATKV.

The Extracellular portion of the chain corresponds to 1-36 (MNAMDNMTADYSPDYFDDAVNSSMCEYDEWEPSYSL). N-linked (GlcNAc...) asparagine glycans are attached at residues Asn-6 and Asn-21. 2 cysteine pairs are disulfide-bonded: Cys-25/Cys-288 and Cys-107/Cys-186. Residues 37–57 (IPVLYMLIFILGLTGNGVVIF) form a helical membrane-spanning segment. The Cytoplasmic segment spans residues 58-75 (TVWRAQSKRRAADVYIGN). The helical transmembrane segment at 76–96 (LALADLTFVVTLPLWAVYTAL) threads the bilayer. Residues 97–108 (GYHWPFGVALCK) are Extracellular-facing. Residues 109–129 (ISSYVVLLNMYASVFCLTCLS) traverse the membrane as a helical segment. The Cytoplasmic portion of the chain corresponds to 130–151 (LDRYMAIVHSLTSTQLRTRGHM). The helical transmembrane segment at 152–172 (RASLTAIWLLSGVLAAPTLLF) threads the bilayer. At 173 to 213 (RTTVYDVETNRTSCAMDFNLVVSQPGQETYWIAGLSISSTA) the chain is on the extracellular side. Asn-182 carries N-linked (GlcNAc...) asparagine glycosylation. A helical transmembrane segment spans residues 214 to 234 (LGFLIPLLAMMVCYGFIGCTV). At 235–251 (TRHFNSLRKEDQRKRRL) the chain is on the cytoplasmic side. Residues 252 to 272 (LKIITTLVVVFAACWMPFHVV) form a helical membrane-spanning segment. Over 273 to 286 (KTMDALSYLNLAPD) the chain is Extracellular. The helical transmembrane segment at 287 to 307 (SCTFLNLLLLAHPYATCLAYV) threads the bilayer. At 308 to 359 (NSCLNPLLYAFFDLRFRSQCLCLLNLKKALHASPASSLSSQKTEAQSLATKV) the chain is on the cytoplasmic side.

Belongs to the G-protein coupled receptor 1 family. In terms of tissue distribution, mesendodermal expression at the blastoderm margin appears by 4.5 hpf. At early gastrulation, expression is maintained ventrolaterally while expression in dorsal cells and random deep cells declines. During gastrulation and segmentation, expression is maintained in adaxial, intermediate, and lateral plate mesoderm. During late segmentation, expressed in several regions including the forming heart. By 24 hpf, expressed in the dorsal aorta, caudal vein, and intersomitic blood vessels.

It is found in the cell membrane. In terms of biological role, g protein-coupled receptor for peptide hormones apelin (apln) and apelin receptor early endogenous ligand (apela), that plays a role in the regulation of normal cardiovascular function and fluid homeostasis. When acting as apelin receptor, activates both G(i) protein pathway that inhibits adenylate cyclase activity, and the beta-arrestin pathway that promotes internalization of the receptor. Also functions as mechanoreceptor that is activated by pathological stimuli in a G-protein-independent fashion to induce beta-arrestin signaling, hence eliciting cardiac hypertrophy. However, the presence of apelin ligand blunts cardiac hypertrophic induction from APLNR/APJ on response to pathological stimuli. Plays a key role in early development such as gastrulation, blood vessels formation and heart morphogenesis by acting as a receptor for apela hormone, promoting endoderm and mesendoderm cell migration and regulating the migration of cells fated to become myocardial progenitors, respectively. Positively regulates angioblast migration toward the embryonic midline, i.e. the position of the future vessel formation, during vasculogenesis. May promote sinus venosus (SV)-derived endothelial cells migration into the developing heart to promote coronary blood vessel development. Required for cardiovascular development, particularly for intersomitic vein angiogenesis by acting as a receptor for apln hormone. Plays a role in various processes in adults such as regulation of blood vessel formation, blood pressure, heart contractility and heart failure. Acts redundantly with agtrl1a in heart development. Its function is as follows. G protein-coupled receptor for peptide hormones apelin (APLN) and apelin receptor early endogenous ligand (APELA/ELA), that plays a role in the regulation of normal cardiovascular function and fluid homeostasis. When acting as apelin receptor, activates both G(i) protein pathway that inhibits adenylate cyclase activity, and the beta-arrestin pathway that promotes internalization of the receptor. APLNR/APJ also functions as mechanoreceptor that is activated by pathological stimuli in a G-protein-independent fashion to induce beta-arrestin signaling, hence eliciting cardiac hypertrophy. Plays a key role in early development such as gastrulation, blood vessels formation and heart morphogenesis by acting as a APELA receptor. May promote angioblast migration toward the embryonic midline, i.e. the position of the future vessel formation, during vasculogenesis. Promotes sinus venosus (SV)-derived endothelial cells migration into the developing heart to promote coronary blood vessel development. Also plays a role in various processes in adults such as regulation of blood vessel formation, blood pressure, heart contractility and heart failure. The sequence is that of Apelin receptor B (aplnrb) from Danio rerio (Zebrafish).